A 170-amino-acid polypeptide reads, in one-letter code: Peptide deformylase (170 aa).

Residues C94 and H136 each contribute to the Fe cation site. E137 is a catalytic residue. Fe cation is bound at residue H140.

It belongs to the polypeptide deformylase family. Fe(2+) is required as a cofactor.

The enzyme catalyses N-terminal N-formyl-L-methionyl-[peptide] + H2O = N-terminal L-methionyl-[peptide] + formate. Removes the formyl group from the N-terminal Met of newly synthesized proteins. Requires at least a dipeptide for an efficient rate of reaction. N-terminal L-methionine is a prerequisite for activity but the enzyme has broad specificity at other positions. This chain is Peptide deformylase, found in Wolinella succinogenes (strain ATCC 29543 / DSM 1740 / CCUG 13145 / JCM 31913 / LMG 7466 / NCTC 11488 / FDC 602W) (Vibrio succinogenes).